The following is a 636-amino-acid chain: Sodium-dependent nutrient amino acid transporter 1 (636 aa).

The tract at residues 1 to 40 is disordered; it reads MELKTMPQNGANNGNPQGNTSNNNNTNDSSNSNSNNNNKT. The Cytoplasmic segment spans residues 1–50; that stretch reads MELKTMPQNGANNGNPQGNTSNNNNTNDSSNSNSNNNNKTERTNWSNGLE. Residues 7-40 show a composition bias toward low complexity; sequence PQNGANNGNPQGNTSNNNNTNDSSNSNSNNNNKT. A run of 3 helical transmembrane segments spans residues 51 to 71, 78 to 98, and 131 to 151; these read FLMS…FPFT, GAFL…MYYL, and TICI…YLAV. A glycan (N-linked (GlcNAc...) asparagine) is linked at N184. 9 helical membrane passes run 225 to 245, 254 to 274, 303 to 323, 337 to 357, 397 to 417, 436 to 456, 469 to 489, 511 to 531, and 547 to 567; these read PDWK…LVIM, AAYF…GRAV, AVVQ…MFSS, IVTT…FAIL, LFSA…IVAL, VALV…TPGG, TYVV…IYGV, CWLI…MVTI, and VAGW…GWWY.

Belongs to the sodium:neurotransmitter symporter (SNF) (TC 2.A.22) family.

It localises to the membrane. Unusual broad substrate spectrum amino acid:sodium cotransporter that promotes absorption of the D isomers of essential amino acids. Neutral amino acids are the preferred substrates, especially methionine and phenylalanine. This is Sodium-dependent nutrient amino acid transporter 1 from Drosophila grimshawi (Hawaiian fruit fly).